The primary structure comprises 185 residues: Ribosome-recycling factor (185 aa).

The protein belongs to the RRF family.

The protein resides in the cytoplasm. Functionally, responsible for the release of ribosomes from messenger RNA at the termination of protein biosynthesis. May increase the efficiency of translation by recycling ribosomes from one round of translation to another. The chain is Ribosome-recycling factor from Photobacterium profundum (strain SS9).